The chain runs to 514 residues: Cytochrome P450 87A3 (514 aa).

A run of 2 helical transmembrane segments spans residues 36–56 (ASSMAYIALLCAALAAVVALL) and 315–335 (LMFVLLFASFETTALALTIGV). Cys463 contacts heme.

This sequence belongs to the cytochrome P450 family. It depends on heme as a cofactor. As to expression, expressed in roots and coleoptiles, but not in leaves.

Its subcellular location is the cytoplasmic vesicle membrane. This Oryza sativa subsp. japonica (Rice) protein is Cytochrome P450 87A3 (CYP87A3).